A 452-amino-acid polypeptide reads, in one-letter code: tRNA-2-methylthio-N(6)-dimethylallyladenosine synthase (452 aa).

The MTTase N-terminal domain occupies 3–118; it reads KKVFIKTYGC…LPQLLAERER (116 aa). Residues Cys-12, Cys-49, Cys-81, Cys-155, Cys-159, and Cys-162 each coordinate [4Fe-4S] cluster. The region spanning 141–379 is the Radical SAM core domain; that stretch reads RVEGASAFVS…QTVINDSIKR (239 aa). A TRAM domain is found at 382–445; sequence ESRLGTVQRI…SFTLRGEVVT (64 aa).

The protein belongs to the methylthiotransferase family. MiaB subfamily. In terms of assembly, monomer. [4Fe-4S] cluster is required as a cofactor.

The protein resides in the cytoplasm. It carries out the reaction N(6)-dimethylallyladenosine(37) in tRNA + (sulfur carrier)-SH + AH2 + 2 S-adenosyl-L-methionine = 2-methylsulfanyl-N(6)-dimethylallyladenosine(37) in tRNA + (sulfur carrier)-H + 5'-deoxyadenosine + L-methionine + A + S-adenosyl-L-homocysteine + 2 H(+). Its function is as follows. Catalyzes the methylthiolation of N6-(dimethylallyl)adenosine (i(6)A), leading to the formation of 2-methylthio-N6-(dimethylallyl)adenosine (ms(2)i(6)A) at position 37 in tRNAs that read codons beginning with uridine. The polypeptide is tRNA-2-methylthio-N(6)-dimethylallyladenosine synthase (Albidiferax ferrireducens (strain ATCC BAA-621 / DSM 15236 / T118) (Rhodoferax ferrireducens)).